A 374-amino-acid chain; its full sequence is Ribonuclease D (374 aa).

A 3'-5' exonuclease domain is found at 6–171 (IISTTEDLKK…RATRVILLSK (166 aa)). The HRDC domain maps to 213-292 (DRKSIGVAQE…ARALNKKEVD (80 aa)).

The protein belongs to the RNase D family. It depends on a divalent metal cation as a cofactor.

The protein localises to the cytoplasm. It carries out the reaction Exonucleolytic cleavage that removes extra residues from the 3'-terminus of tRNA to produce 5'-mononucleotides.. Exonuclease involved in the 3' processing of various precursor tRNAs. Initiates hydrolysis at the 3'-terminus of an RNA molecule and releases 5'-mononucleotides. This chain is Ribonuclease D, found in Desulfotalea psychrophila (strain LSv54 / DSM 12343).